The primary structure comprises 156 residues: Ribosome maturation factor RimP (156 aa).

The protein belongs to the RimP family.

The protein localises to the cytoplasm. Required for maturation of 30S ribosomal subunits. In Exiguobacterium sp. (strain ATCC BAA-1283 / AT1b), this protein is Ribosome maturation factor RimP.